The chain runs to 300 residues: Protease HtpX homolog (300 aa).

Helical transmembrane passes span 7 to 24 (GILM…GALI) and 29 to 46 (GAII…FTFW). His130 is a Zn(2+) binding site. The active site involves Glu131. Position 134 (His134) interacts with Zn(2+). Helical transmembrane passes span 145–165 (VTAT…FFGG) and 174–194 (PMGL…AGLV). Glu203 is a Zn(2+) binding site.

It belongs to the peptidase M48B family. The cofactor is Zn(2+).

The protein localises to the cell inner membrane. In Cereibacter sphaeroides (strain ATCC 17029 / ATH 2.4.9) (Rhodobacter sphaeroides), this protein is Protease HtpX homolog.